A 417-amino-acid chain; its full sequence is Serine hydroxymethyltransferase (417 aa).

(6S)-5,6,7,8-tetrahydrofolate-binding positions include leucine 121 and glycine 125–leucine 127. Lysine 229 is subject to N6-(pyridoxal phosphate)lysine. Position 355 to 357 (serine 355 to phenylalanine 357) interacts with (6S)-5,6,7,8-tetrahydrofolate.

This sequence belongs to the SHMT family. In terms of assembly, homodimer. Requires pyridoxal 5'-phosphate as cofactor.

It is found in the cytoplasm. The catalysed reaction is (6R)-5,10-methylene-5,6,7,8-tetrahydrofolate + glycine + H2O = (6S)-5,6,7,8-tetrahydrofolate + L-serine. Its pathway is one-carbon metabolism; tetrahydrofolate interconversion. It participates in amino-acid biosynthesis; glycine biosynthesis; glycine from L-serine: step 1/1. In terms of biological role, catalyzes the reversible interconversion of serine and glycine with tetrahydrofolate (THF) serving as the one-carbon carrier. This reaction serves as the major source of one-carbon groups required for the biosynthesis of purines, thymidylate, methionine, and other important biomolecules. Also exhibits THF-independent aldolase activity toward beta-hydroxyamino acids, producing glycine and aldehydes, via a retro-aldol mechanism. The sequence is that of Serine hydroxymethyltransferase from Stenotrophomonas maltophilia (strain K279a).